A 597-amino-acid polypeptide reads, in one-letter code: Elongation factor 4 (597 aa).

Positions 2 to 184 constitute a tr-type G domain; sequence DHIRNFSIIA…ALIAKVPPPK (183 aa). GTP-binding positions include 14 to 19 and 131 to 134; these read DHGKST and NKID.

This sequence belongs to the TRAFAC class translation factor GTPase superfamily. Classic translation factor GTPase family. LepA subfamily.

It is found in the cell inner membrane. The enzyme catalyses GTP + H2O = GDP + phosphate + H(+). Its function is as follows. Required for accurate and efficient protein synthesis under certain stress conditions. May act as a fidelity factor of the translation reaction, by catalyzing a one-codon backward translocation of tRNAs on improperly translocated ribosomes. Back-translocation proceeds from a post-translocation (POST) complex to a pre-translocation (PRE) complex, thus giving elongation factor G a second chance to translocate the tRNAs correctly. Binds to ribosomes in a GTP-dependent manner. In Burkholderia vietnamiensis (strain G4 / LMG 22486) (Burkholderia cepacia (strain R1808)), this protein is Elongation factor 4.